Consider the following 120-residue polypeptide: Large ribosomal subunit protein bL17 (120 aa).

It belongs to the bacterial ribosomal protein bL17 family. In terms of assembly, part of the 50S ribosomal subunit. Contacts protein L32.

This Mesomycoplasma hyopneumoniae (strain 232) (Mycoplasma hyopneumoniae) protein is Large ribosomal subunit protein bL17.